Here is an 81-residue protein sequence, read N- to C-terminus: Putative defensin-like protein 31 (81 aa).

A signal peptide spans 1–26; sequence MTSSSKCLFFVFLCLAALLTPYLAEA. 3 cysteine pairs are disulfide-bonded: Cys38-Cys58, Cys44-Cys70, and Cys48-Cys72.

This sequence belongs to the DEFL family.

The protein localises to the secreted. The sequence is that of Putative defensin-like protein 31 from Arabidopsis thaliana (Mouse-ear cress).